Here is a 303-residue protein sequence, read N- to C-terminus: Probable endonuclease 4 (303 aa).

His75, His115, Glu151, Asp185, His188, His221, Asp234, His236, and Glu266 together coordinate Zn(2+).

The protein belongs to the AP endonuclease 2 family. Zn(2+) is required as a cofactor.

It carries out the reaction Endonucleolytic cleavage to 5'-phosphooligonucleotide end-products.. Its function is as follows. Endonuclease IV plays a role in DNA repair. It cleaves phosphodiester bonds at apurinic or apyrimidinic (AP) sites, generating a 3'-hydroxyl group and a 5'-terminal sugar phosphate. The chain is Probable endonuclease 4 from Ureaplasma parvum serovar 3 (strain ATCC 700970).